A 141-amino-acid chain; its full sequence is Calcium-binding protein SPEC 2D (141 aa).

EF-hand domains are found at residues 10–42 (DQIK…MKSV), 43–72 (GHVL…AMIL), 73–107 (DKKC…FDRQ), and 108–141 (ITED…MNFC). The Ca(2+) site is built by Asp23, Asn25, Asp27, and Asn29. Residues Asp84, Asp86, Lys90, Asp95, Asp121, Asp125, Lys127, and Glu132 each coordinate Ca(2+).

In terms of tissue distribution, found in cell lineages giving rise to the aboral ectoderm, a squamous epithelium covering the surface of the late stage embryo and larva.

In terms of biological role, calcium-binding protein involved in larval development and metamorphosis. Likely to function as calcium buffers mediating the transport of calcium from the sea water to the blastocoel where calcium is required for skeleton formation. This Strongylocentrotus purpuratus (Purple sea urchin) protein is Calcium-binding protein SPEC 2D (SPEC2D).